Here is a 158-residue protein sequence, read N- to C-terminus: Transcription antitermination protein NusB (158 aa).

Over residues 1-12 (MKRVEKRAEKQG) the composition is skewed to basic and acidic residues. Positions 1–20 (MKRVEKRAEKQGRGTARKSR) are disordered.

This sequence belongs to the NusB family.

Involved in transcription antitermination. Required for transcription of ribosomal RNA (rRNA) genes. Binds specifically to the boxA antiterminator sequence of the ribosomal RNA (rrn) operons. This chain is Transcription antitermination protein NusB, found in Nitrosospira multiformis (strain ATCC 25196 / NCIMB 11849 / C 71).